Here is a 324-residue protein sequence, read N- to C-terminus: NADH-cytochrome b5 reductase 2 (324 aa).

Residues 31–47 (IPLIGGITLAAGAGYYY) traverse the membrane as a helical segment. One can recognise an FAD-binding FR-type domain in the interval 70 to 178 (QGWIGLKLAH…KGPLPKYPWE (109 aa)). Residue 181 to 216 (KHDHICLIAGGTGITPMYQLVRKIFSNPEDKTKVTL) coordinates FAD.

Belongs to the flavoprotein pyridine nucleotide cytochrome reductase family. The cofactor is FAD.

The protein localises to the mitochondrion outer membrane. The catalysed reaction is 2 Fe(III)-[cytochrome b5] + NADH = 2 Fe(II)-[cytochrome b5] + NAD(+) + H(+). Functionally, may mediate the reduction of outer membrane cytochrome b5. In Ajellomyces capsulatus (strain NAm1 / WU24) (Darling's disease fungus), this protein is NADH-cytochrome b5 reductase 2 (MCR1).